The chain runs to 233 residues: ATP synthase subunit a, chloroplastic (233 aa).

Transmembrane regions (helical) follow at residues 82-102, 121-141, 177-199, and 211-231; these read VPFIGTLFLFIFVSNWSGALI, INTTAALALLTSLAYFYAGIS, LFGNILADELVVSVLTLLVPLIV, and SSIQALIFATLAAAYIGEAIE.

This sequence belongs to the ATPase A chain family. In terms of assembly, F-type ATPases have 2 components, CF(1) - the catalytic core - and CF(0) - the membrane proton channel. CF(1) has five subunits: alpha(3), beta(3), gamma(1), delta(1), epsilon(1). CF(0) has four main subunits: a, b, b' and c.

It is found in the plastid. The protein localises to the chloroplast thylakoid membrane. Functionally, key component of the proton channel; it plays a direct role in the translocation of protons across the membrane. The protein is ATP synthase subunit a, chloroplastic of Galdieria sulphuraria (Red alga).